A 351-amino-acid polypeptide reads, in one-letter code: Modulator of apoptosis 1 (351 aa).

An LIR motif is present at residues 49-52 (YRLL). A BH3-like region spans residues 120 to 127 (LTRALAHE). The RASSF1-binding stretch occupies residues 202–205 (KRRR).

The protein belongs to the PNMA family. Homodimer. Under normal circumstances, held in an inactive conformation by an intramolecular interaction. Interacts with BAX. Binding to RASSF1 isoform A (RASSF1A) relieves this inhibitory interaction and allows further binding to BAX. Also binds to BCL2 and BCLX. Recruited to the TNFRSF1A and TNFRSF10A complexes in response to their respective cognate ligand, after internalization. Interacts with TRIM39. Interacts with RASSF6. Interacts with ATG8 proteins MAP1LC3A, MAP1LC3B and MAP1LC3C. Does not interact with ATG8 proteins GABARAPL1, GABARAPL2 and GABARAP. Interacts with SQSTM1; promoting dissociation of SQSTM1 inclusion bodies that sequester KEAP1. Ubiquitinated and degraded during mitotic exit by APC/C-Cdh1, this modification is inhibited by TRIM39.

The protein localises to the cytoplasm. The protein resides in the cytosol. It localises to the mitochondrion outer membrane. It is found in the extracellular vesicle membrane. Its function is as follows. Retrotransposon-derived protein that forms virion-like capsids. Acts as an effector of BAX during apoptosis: enriched at outer mitochondria membrane and associates with BAX upon induction of apoptosis, facilitating BAX-dependent mitochondrial outer membrane permeabilization and apoptosis. Required for death receptor-dependent apoptosis. When associated with RASSF1, promotes BAX conformational change and translocation to mitochondrial membranes in response to TNF and TNFSF10 stimulation. Also promotes autophagy: promotes phagophore closure via association with ATG8 proteins. Acts as an inhibitor of the NFE2L2/NRF2 pathway via interaction with SQSTM1: interaction promotes dissociation of SQSTM1 inclusion bodies that sequester KEAP1, relieving inactivation of the BCR(KEAP1) complex. The chain is Modulator of apoptosis 1 from Macaca fascicularis (Crab-eating macaque).